The following is a 418-amino-acid chain: Actin-related protein 3 (418 aa).

The residue at position 2 (Ala-2) is an N-acetylalanine. N6-acetyllysine occurs at positions 240, 244, 251, and 254.

The protein belongs to the actin family. ARP3 subfamily. In terms of assembly, component of the Arp2/3 complex composed of ACTR2/ARP2, ACTR3/ARP3, ARPC1B/p41-ARC, ARPC2/p34-ARC, ARPC3/p21-ARC, ARPC4/p20-ARC and ARPC5/p16-ARC. Interacts with WHDC1. Interacts weakly with MEFV. Interacts with AVIL. As to quaternary structure, (Microbial infection) Interacts with bacterium B.thailandensis BimA.

The protein resides in the cytoplasm. It is found in the cytoskeleton. It localises to the cell projection. Its subcellular location is the nucleus. Functionally, ATP-binding component of the Arp2/3 complex, a multiprotein complex that mediates actin polymerization upon stimulation by nucleation-promoting factor (NPF). The Arp2/3 complex mediates the formation of branched actin networks in the cytoplasm, providing the force for cell motility. Seems to contact the pointed end of the daughter actin filament. In podocytes, required for the formation of lamellipodia downstream of AVIL and PLCE1 regulation. In addition to its role in the cytoplasmic cytoskeleton, the Arp2/3 complex also promotes actin polymerization in the nucleus, thereby regulating gene transcription and repair of damaged DNA. The Arp2/3 complex promotes homologous recombination (HR) repair in response to DNA damage by promoting nuclear actin polymerization, leading to drive motility of double-strand breaks (DSBs). Plays a role in ciliogenesis. The chain is Actin-related protein 3 (Actr3) from Mus musculus (Mouse).